The primary structure comprises 71 residues: MINKNISIQINGEPFNCSEPLSLQFLLNYLDFNSERIAIEINSTLLPERLFHSTYINDQDKVEIITIVGGG.

Belongs to the ycf40 family.

It localises to the plastid. The protein resides in the chloroplast. This is an uncharacterized protein from Porphyra purpurea (Red seaweed).